A 328-amino-acid polypeptide reads, in one-letter code: Sulfate adenylyltransferase subunit 2 (328 aa).

Residues Glu-305–Phe-328 form a disordered region.

The protein belongs to the PAPS reductase family. CysD subfamily. Heterodimer composed of CysD, the smaller subunit, and CysN.

It catalyses the reaction sulfate + ATP + H(+) = adenosine 5'-phosphosulfate + diphosphate. It functions in the pathway sulfur metabolism; hydrogen sulfide biosynthesis; sulfite from sulfate: step 1/3. Functionally, with CysN forms the ATP sulfurylase (ATPS) that catalyzes the adenylation of sulfate producing adenosine 5'-phosphosulfate (APS) and diphosphate, the first enzymatic step in sulfur assimilation pathway. APS synthesis involves the formation of a high-energy phosphoric-sulfuric acid anhydride bond driven by GTP hydrolysis by CysN coupled to ATP hydrolysis by CysD. This is Sulfate adenylyltransferase subunit 2 from Rhodopseudomonas palustris (strain BisB18).